The sequence spans 256 residues: Small ribosomal subunit protein eS1 (256 aa).

Ala-2 bears the N-acetylalanine; partial mark.

It belongs to the eukaryotic ribosomal protein eS1 family. Component of the small ribosomal subunit. Mature ribosomes consist of a small (40S) and a large (60S) subunit. The 40S subunit contains about 33 different proteins and 1 molecule of RNA (18S). The 60S subunit contains about 49 different proteins and 3 molecules of RNA (25S, 5.8S and 5S).

It localises to the cytoplasm. This Lentinula edodes (Shiitake mushroom) protein is Small ribosomal subunit protein eS1.